Consider the following 422-residue polypeptide: Testin (422 aa).

The 108-residue stretch at 92–199 (MILTSPVAAK…GDVKLPKEVE (108 aa)) folds into the PET domain. Residues 135–165 (QPVAGSEGAQYRKKQLAKQLPAHDQDPSKCH) form a disordered region. Residues 155 to 165 (PAHDQDPSKCH) show a composition bias toward basic and acidic residues. LIM zinc-binding domains are found at residues 234–299 (YYCF…SEKP), 300–359 (RCAG…NHAV), and 360–422 (SCQG…KMSS).

This sequence belongs to the prickle / espinas / testin family.

It localises to the cytoplasm. It is found in the cell cortex. The protein localises to the cell junction. The protein resides in the focal adhesion. In terms of biological role, scaffold protein that may play a role in cell adhesion, cell spreading and in the reorganization of the actin cytoskeleton. May inhibit cell growth. Regulates cranial neural crest migration. Acts together with prickle1 to control axial elongation. This Xenopus tropicalis (Western clawed frog) protein is Testin.